The following is a 185-amino-acid chain: Putative lipoprotein LprB (185 aa).

The first 24 residues, 1-24 (MRRKVRRLTLAVSALVALFPAVAG), serve as a signal peptide directing secretion. C25 carries the N-palmitoyl cysteine lipid modification. The S-diacylglycerol cysteine moiety is linked to residue C25. The interval 26–50 (SDSGDNKPGATIPSTPANAEGRHGP) is disordered.

The protein resides in the cell membrane. The sequence is that of Putative lipoprotein LprB (lprB) from Mycobacterium tuberculosis (strain CDC 1551 / Oshkosh).